Reading from the N-terminus, the 141-residue chain is Nucleoside diphosphate kinase (141 aa).

ATP-binding residues include Lys-11, Phe-59, Arg-87, Thr-93, Arg-104, and Asn-114. Residue His-117 is the Pros-phosphohistidine intermediate of the active site.

Belongs to the NDK family. Homotetramer. Mg(2+) is required as a cofactor.

The protein resides in the cytoplasm. The catalysed reaction is a 2'-deoxyribonucleoside 5'-diphosphate + ATP = a 2'-deoxyribonucleoside 5'-triphosphate + ADP. It catalyses the reaction a ribonucleoside 5'-diphosphate + ATP = a ribonucleoside 5'-triphosphate + ADP. Its function is as follows. Major role in the synthesis of nucleoside triphosphates other than ATP. The ATP gamma phosphate is transferred to the NDP beta phosphate via a ping-pong mechanism, using a phosphorylated active-site intermediate. The sequence is that of Nucleoside diphosphate kinase from Bordetella avium (strain 197N).